The following is a 654-amino-acid chain: Beta-galactosidase-1-like protein (654 aa).

The signal sequence occupies residues 1 to 27 (MAPKKPSCLRSLLLPLSLTLLLPQADT). Asn-97 carries N-linked (GlcNAc...) asparagine glycosylation. Glu-186 functions as the Proton donor in the catalytic mechanism. N-linked (GlcNAc...) asparagine glycosylation occurs at Asn-243. Glu-264 acts as the Nucleophile in catalysis.

This sequence belongs to the glycosyl hydrolase 35 family.

Its subcellular location is the secreted. Its function is as follows. Probable glycosyl hydrolase. The polypeptide is Beta-galactosidase-1-like protein (GLB1L) (Macaca fascicularis (Crab-eating macaque)).